We begin with the raw amino-acid sequence, 194 residues long: Protein ORF31 (194 aa).

Residues 1-25 (MKSVASPLCQFHGVFCLYQCRQCLA) form the signal peptide.

This sequence belongs to the herpesviridae UL92 family. Interacts with ORF34.

It localises to the host nucleus. Its subcellular location is the host cytoplasm. Functionally, plays an important role in the expression of late genes. May play a role in viral replication. The protein is Protein ORF31 (ORF31) of Homo sapiens (Human).